The primary structure comprises 351 residues: Protein-glutamate methylesterase/protein-glutamine glutaminase (351 aa).

In terms of domain architecture, Response regulatory spans Thr-8–Asp-125. Asp-59 is modified (4-aspartylphosphate). One can recognise a CheB-type methylesterase domain in the interval Pro-151 to Arg-345. Active-site residues include Ser-162, His-188, and Asp-287.

This sequence belongs to the CheB family. Post-translationally, phosphorylated by CheA. Phosphorylation of the N-terminal regulatory domain activates the methylesterase activity.

Its subcellular location is the cytoplasm. The catalysed reaction is [protein]-L-glutamate 5-O-methyl ester + H2O = L-glutamyl-[protein] + methanol + H(+). The enzyme catalyses L-glutaminyl-[protein] + H2O = L-glutamyl-[protein] + NH4(+). Functionally, involved in chemotaxis. Part of a chemotaxis signal transduction system that modulates chemotaxis in response to various stimuli. Catalyzes the demethylation of specific methylglutamate residues introduced into the chemoreceptors (methyl-accepting chemotaxis proteins or MCP) by CheR. Also mediates the irreversible deamidation of specific glutamine residues to glutamic acid. This Gluconobacter oxydans (strain 621H) (Gluconobacter suboxydans) protein is Protein-glutamate methylesterase/protein-glutamine glutaminase.